A 592-amino-acid polypeptide reads, in one-letter code: 2-succinyl-5-enolpyruvyl-6-hydroxy-3-cyclohexene-1-carboxylate synthase (592 aa).

This sequence belongs to the TPP enzyme family. MenD subfamily. Homodimer. The cofactor is Mg(2+). Mn(2+) serves as cofactor. Thiamine diphosphate is required as a cofactor.

The catalysed reaction is isochorismate + 2-oxoglutarate + H(+) = 5-enolpyruvoyl-6-hydroxy-2-succinyl-cyclohex-3-ene-1-carboxylate + CO2. The protein operates within quinol/quinone metabolism; 1,4-dihydroxy-2-naphthoate biosynthesis; 1,4-dihydroxy-2-naphthoate from chorismate: step 2/7. It functions in the pathway quinol/quinone metabolism; menaquinone biosynthesis. Catalyzes the thiamine diphosphate-dependent decarboxylation of 2-oxoglutarate and the subsequent addition of the resulting succinic semialdehyde-thiamine pyrophosphate anion to isochorismate to yield 2-succinyl-5-enolpyruvyl-6-hydroxy-3-cyclohexene-1-carboxylate (SEPHCHC). The polypeptide is 2-succinyl-5-enolpyruvyl-6-hydroxy-3-cyclohexene-1-carboxylate synthase (Haloarcula marismortui (strain ATCC 43049 / DSM 3752 / JCM 8966 / VKM B-1809) (Halobacterium marismortui)).